The primary structure comprises 472 residues: 4-O-methyl-glucuronoyl methylesterase 1 (472 aa).

A signal peptide spans 1 to 20; that stretch reads MKSAAYLAALAAVLPAYVNA. The CBM1 domain maps to 21–56; the sequence is QAQEWGQCGGIGWTGATTCVSGTVCTVLNPYYSQCL. A disordered region spans residues 62 to 97; it reads TAPPPPPPPPTSVSSSSSSSTSSAPPSGPSGTSPTC. A compositionally biased stretch (pro residues) spans 63–72; that stretch reads APPPPPPPPT. Over residues 73-96 the composition is skewed to low complexity; that stretch reads SVSSSSSSSTSSAPPSGPSGTSPT. Cystine bridges form between Cys97-Cys131, Cys283-Cys419, and Cys315-Cys391. Positions 282 to 287 match the GXSYXG catalytic site motif motif; the sequence is GCSRDG. Ser284 serves as the catalytic Nucleophile. Residues Lys288, Gln330, Glu338, and Trp382 each contribute to the substrate site. The Proton donor/acceptor role is filled by His418. An N-linked (GlcNAc...) asparagine glycan is attached at Asn465.

The protein belongs to the carbohydrate esterase 15 (CE15) family.

The protein resides in the secreted. The enzyme catalyses a 4-O-methyl-alpha-D-glucuronosyl ester derivative + H2O = 4-O-methyl-alpha-D-glucuronate derivative + an alcohol + H(+). In terms of biological role, glucuronoyl esterase which may play a significant role in biomass degradation, as it is considered to disconnect hemicellulose from lignin through the hydrolysis of the ester bond between 4-O-methyl-D-glucuronic acid residues of glucuronoxylans and aromatic alcohols of lignin. Can hydrolyze benzyl glucuronic acid (BnGlcA), allyl glucuronic acid (allylGlcA) and to a lower degree methyl glucuronic acid (MeGlcA) in vitro. In Phanerochaete chrysosporium (strain RP-78 / ATCC MYA-4764 / FGSC 9002) (White-rot fungus), this protein is 4-O-methyl-glucuronoyl methylesterase 1.